Reading from the N-terminus, the 734-residue chain is Photosystem I P700 chlorophyll a apoprotein A2 (734 aa).

8 helical membrane passes run Ile-46–Ala-69, Leu-135–Gln-158, Leu-175–Ile-199, Met-273–Tyr-291, Leu-330–Tyr-353, Ala-369–Ile-395, Ala-417–His-439, and Phe-517–Val-535. [4Fe-4S] cluster-binding residues include Cys-559 and Cys-568. A run of 2 helical transmembrane segments spans residues Ala-575 to Trp-596 and Leu-643 to Ile-665. Residues His-654, Met-662, and Tyr-670 each contribute to the chlorophyll a site. Trp-671 provides a ligand contact to phylloquinone. The chain crosses the membrane as a helical span at residues Leu-707 to Ala-727.

Belongs to the PsaA/PsaB family. The PsaA/B heterodimer binds the P700 chlorophyll special pair and subsequent electron acceptors. PSI consists of a core antenna complex that captures photons, and an electron transfer chain that converts photonic excitation into a charge separation. The eukaryotic PSI reaction center is composed of at least 11 subunits. P700 is a chlorophyll a/chlorophyll a' dimer, A0 is one or more chlorophyll a, A1 is one or both phylloquinones and FX is a shared 4Fe-4S iron-sulfur center. serves as cofactor.

Its subcellular location is the plastid. The protein resides in the chloroplast thylakoid membrane. It catalyses the reaction reduced [plastocyanin] + hnu + oxidized [2Fe-2S]-[ferredoxin] = oxidized [plastocyanin] + reduced [2Fe-2S]-[ferredoxin]. Functionally, psaA and PsaB bind P700, the primary electron donor of photosystem I (PSI), as well as the electron acceptors A0, A1 and FX. PSI is a plastocyanin-ferredoxin oxidoreductase, converting photonic excitation into a charge separation, which transfers an electron from the donor P700 chlorophyll pair to the spectroscopically characterized acceptors A0, A1, FX, FA and FB in turn. Oxidized P700 is reduced on the lumenal side of the thylakoid membrane by plastocyanin. The polypeptide is Photosystem I P700 chlorophyll a apoprotein A2 (Solanum tuberosum (Potato)).